The primary structure comprises 384 residues: Putative 8-amino-7-oxononanoate synthase (384 aa).

Residue arginine 18 participates in substrate binding. Pyridoxal 5'-phosphate is bound at residue 105-106 (GY). Histidine 130 lines the substrate pocket. Pyridoxal 5'-phosphate contacts are provided by residues serine 176, 201 to 204 (DDAH), and 233 to 236 (TLSK). Lysine 236 is modified (N6-(pyridoxal phosphate)lysine). Residue threonine 349 participates in substrate binding.

It belongs to the class-II pyridoxal-phosphate-dependent aminotransferase family. BioF subfamily. As to quaternary structure, homodimer. The cofactor is pyridoxal 5'-phosphate.

It catalyses the reaction 6-carboxyhexanoyl-[ACP] + L-alanine + H(+) = (8S)-8-amino-7-oxononanoate + holo-[ACP] + CO2. The protein operates within cofactor biosynthesis; biotin biosynthesis. Functionally, catalyzes the decarboxylative condensation of pimeloyl-[acyl-carrier protein] and L-alanine to produce 8-amino-7-oxononanoate (AON), [acyl-carrier protein], and carbon dioxide. This chain is Putative 8-amino-7-oxononanoate synthase (bioF), found in Desulfovibrio desulfuricans (strain ATCC 27774 / DSM 6949 / MB).